A 381-amino-acid chain; its full sequence is MSTNHLLEIKQYGQSIWMDNLTRDIIQSGELKDMVENQGISGITSNPAIFEKAIAGNAIYDADIEAGVRAGLPIYKIYESLVFADIRNACDILRPVYEASNRLDGYVSIEVPPTIAHDTEATISEARRYFQEIGRENLMIKIPGTEPGLPAVEQVIAEGMNVNITLLFSVESYVNTAWAYVRGLEKRLAEGKDISRIASVASFFLSRIDSNIDAKIDAKLKKGVDDIAVEAKLKAVKGKVAIANAKLAYQEYKKIIRSERWQELVAKGATVQRLLWASTSTKDPNYNDVMYIEELVGPDTVNTVPPATIKACADHCNVSDRLETDVNNAYTLIENLKDPDINIDLDTVMDELLVEGIDKFIQPFQSLMNSLEDKIKVLSPV.

K141 serves as the catalytic Schiff-base intermediate with substrate.

Belongs to the transaldolase family. Type 2 subfamily.

It localises to the cytoplasm. It carries out the reaction D-sedoheptulose 7-phosphate + D-glyceraldehyde 3-phosphate = D-erythrose 4-phosphate + beta-D-fructose 6-phosphate. It participates in carbohydrate degradation; pentose phosphate pathway; D-glyceraldehyde 3-phosphate and beta-D-fructose 6-phosphate from D-ribose 5-phosphate and D-xylulose 5-phosphate (non-oxidative stage): step 2/3. Its function is as follows. Transaldolase is important for the balance of metabolites in the pentose-phosphate pathway. This Nostoc punctiforme (strain ATCC 29133 / PCC 73102) protein is Transaldolase 2 (tal2).